The following is a 186-amino-acid chain: Ribosome-recycling factor (186 aa).

Belongs to the RRF family.

Its subcellular location is the cytoplasm. Functionally, responsible for the release of ribosomes from messenger RNA at the termination of protein biosynthesis. May increase the efficiency of translation by recycling ribosomes from one round of translation to another. This chain is Ribosome-recycling factor, found in Pediococcus pentosaceus (strain ATCC 25745 / CCUG 21536 / LMG 10740 / 183-1w).